A 148-amino-acid chain; its full sequence is uncharacterized protein (148 aa).

In terms of domain architecture, HTH asnC-type spans 3–64 (IDDLDRKILS…KLNYEKLGYE (62 aa)). Positions 22 to 41 (YREIAKKLNVAVGTIYNRIK) form a DNA-binding region, H-T-H motif.

This is an uncharacterized protein from Pyrococcus furiosus (strain ATCC 43587 / DSM 3638 / JCM 8422 / Vc1).